The following is a 152-amino-acid chain: UPF0178 protein YaiI (152 aa).

The protein belongs to the UPF0178 family.

This Shigella flexneri protein is UPF0178 protein YaiI.